A 70-amino-acid polypeptide reads, in one-letter code: Protein tam14 (70 aa).

Over residues 1-19 the composition is skewed to polar residues; that stretch reads MPTVQTPSQRRANTQFQKN. The interval 1–20 is disordered; sequence MPTVQTPSQRRANTQFQKNI. The helical transmembrane segment at 45–65 threads the bilayer; it reads IAMFFILLMSGGIILGILRFL.

This sequence belongs to the RAMP4 family.

It localises to the membrane. Its subcellular location is the endoplasmic reticulum membrane. Its function is as follows. Interacts with target proteins during their translocation into the lumen of the endoplasmic reticulum. Protects unfolded target proteins against degradation during ER stress. May facilitate glycosylation of target proteins after termination of ER stress. In Schizosaccharomyces pombe (strain 972 / ATCC 24843) (Fission yeast), this protein is Protein tam14 (tam14).